The following is a 267-amino-acid chain: Ribosomal RNA small subunit methyltransferase A (267 aa).

The S-adenosyl-L-methionine site is built by Asn18, Leu20, Gly45, Glu66, Asp91, and Asn112.

This sequence belongs to the class I-like SAM-binding methyltransferase superfamily. rRNA adenine N(6)-methyltransferase family. RsmA subfamily.

The protein resides in the cytoplasm. The catalysed reaction is adenosine(1518)/adenosine(1519) in 16S rRNA + 4 S-adenosyl-L-methionine = N(6)-dimethyladenosine(1518)/N(6)-dimethyladenosine(1519) in 16S rRNA + 4 S-adenosyl-L-homocysteine + 4 H(+). Specifically dimethylates two adjacent adenosines (A1518 and A1519) in the loop of a conserved hairpin near the 3'-end of 16S rRNA in the 30S particle. May play a critical role in biogenesis of 30S subunits. In Shewanella pealeana (strain ATCC 700345 / ANG-SQ1), this protein is Ribosomal RNA small subunit methyltransferase A.